The primary structure comprises 118 residues: UPF0342 protein BpOF4_11360 (118 aa).

This sequence belongs to the UPF0342 family.

This chain is UPF0342 protein BpOF4_11360, found in Alkalihalophilus pseudofirmus (strain ATCC BAA-2126 / JCM 17055 / OF4) (Bacillus pseudofirmus).